The primary structure comprises 418 residues: Alpha-(1-&gt;3)-arabinofuranosyltransferase (418 aa).

A run of 11 helical transmembrane segments spans residues 25 to 45, 81 to 101, 102 to 122, 125 to 145, 153 to 173, 183 to 203, 210 to 230, 266 to 286, 293 to 312, 327 to 349, and 372 to 392; these read NAVA…VLAI, YLYN…THFT, LARW…FGLL, LSGW…AMLT, IFSN…WCVV, VIGL…LPLV, LILG…LVPG, MEIT…LALL, PYFW…FFLS, IFTL…AYFF, and ATVG…IWFI.

Belongs to the glycosyltransferase 87 family.

The protein resides in the cell membrane. The enzyme catalyses Adds an alpha-D-arabinofuranosyl group from trans,octacis-decaprenylphospho-beta-D-arabinofuranose at the 3-O-position of an alpha-(1-&gt;5)-arabinofuranan chain attached to a beta-(1-&gt;5)-galactofuranan chain.. It functions in the pathway cell wall biogenesis; cell wall polysaccharide biosynthesis. Its function is as follows. Involved in the biosynthesis of the arabinogalactan (AG) region of the mycolylarabinogalactan-peptidoglycan (mAGP) complex, an essential component of the corynebacterial cell wall. Catalyzes the addition of an arabinofuranosyl (Araf) residue from the sugar donor beta-D-arabinofuranosyl-1-monophosphoryldecaprenol (DPA) on the C-3 of an alpha-(1-&gt;5)-linked Araf from the arabinan backbone of AG. The chain is Alpha-(1-&gt;3)-arabinofuranosyltransferase from Corynebacterium glutamicum (strain ATCC 13032 / DSM 20300 / JCM 1318 / BCRC 11384 / CCUG 27702 / LMG 3730 / NBRC 12168 / NCIMB 10025 / NRRL B-2784 / 534).